The primary structure comprises 365 residues: Probable cinnamyl alcohol dehydrogenase (365 aa).

C47 contributes to the Zn(2+) binding site. T49 serves as a coordination point for NADP(+). The Zn(2+) site is built by H69, E70, C100, C103, C106, C114, and C163. NADP(+) contacts are provided by residues T167, 188 to 193 (GLGGVG), 211 to 216 (SSSSKK), T251, G275, and 298 to 300 (SFI).

Belongs to the zinc-containing alcohol dehydrogenase family. As to quaternary structure, homodimer. The cofactor is Zn(2+).

It carries out the reaction (E)-cinnamyl alcohol + NADP(+) = (E)-cinnamaldehyde + NADPH + H(+). The enzyme catalyses (E)-coniferol + NADP(+) = (E)-coniferaldehyde + NADPH + H(+). It catalyses the reaction (E)-sinapyl alcohol + NADP(+) = (E)-sinapaldehyde + NADPH + H(+). The catalysed reaction is (E)-4-coumaroyl alcohol + NADP(+) = (E)-4-coumaraldehyde + NADPH + H(+). It carries out the reaction (E)-caffeyl alcohol + NADP(+) = (E)-caffeyl aldehyde + NADPH + H(+). Its pathway is aromatic compound metabolism; phenylpropanoid biosynthesis. Involved in lignin biosynthesis. Catalyzes the final step specific for the production of lignin monomers. Catalyzes the NADPH-dependent reduction of coniferaldehyde, 5-hydroxyconiferaldehyde, sinapaldehyde, 4-coumaraldehyde and caffeyl aldehyde to their respective alcohols. The polypeptide is Probable cinnamyl alcohol dehydrogenase (CAD) (Saccharum officinarum (Sugarcane)).